A 149-amino-acid polypeptide reads, in one-letter code: Protein K7 (149 aa).

The protein belongs to the orthopoxvirus OPG044 family. In terms of assembly, interacts with DDX3; this interaction inhibits DDX3 and suppresses DDX3-mediated IFN-beta promoter induction. Interacts with TRAF6 and IRAK2; these interactions suppress TLR-dependent NF-KappaB activation.

The protein resides in the host cytoplasm. Its function is as follows. Virulence factor that affects the acute immune response to infection. Bcl-2-like protein which, through its interaction with the DEAD box RNA helicase DDX3X/DDX3, prevents TBK1/IKKepsilon-mediated IRF3 activation. Contributes to virulence by binding to the host TRAF6 and IRAK2 and preventing host NF-kappa-B activation. The chain is Protein K7 (OPG044) from Homo sapiens (Human).